The following is a 160-amino-acid chain: Small ribosomal subunit protein uS7 (160 aa).

Belongs to the universal ribosomal protein uS7 family. Part of the 30S ribosomal subunit. Contacts proteins S9 and S11.

Functionally, one of the primary rRNA binding proteins, it binds directly to 16S rRNA where it nucleates assembly of the head domain of the 30S subunit. Is located at the subunit interface close to the decoding center, probably blocks exit of the E-site tRNA. The protein is Small ribosomal subunit protein uS7 of Hydrogenobaculum sp. (strain Y04AAS1).